The following is a 368-amino-acid chain: Left-right determination factor 1 (368 aa).

Residues 1–21 (MPFLWLCWALWALSLVSLREA) form the signal peptide. Residues 22-76 (LTGEQILGSLLQQLQLDQPPVLDKADVEGMVIPSHVRTQYVALLQHSHASRSRGK) constitute a propeptide, or 135. The N-linked (GlcNAc...) asparagine glycan is linked to N158. Disulfide bonds link C253/C266, C265/C318, C295/C353, and C299/C355.

Belongs to the TGF-beta family. The processing of the protein may also occur at the second R-X-X-R site located at AA 132-135. Processing appears to be regulated in a cell-type specific manner.

The protein localises to the secreted. Required for left-right axis determination as a regulator of LEFTY2 and NODAL. The polypeptide is Left-right determination factor 1 (Lefty1) (Mus musculus (Mouse)).